We begin with the raw amino-acid sequence, 221 residues long: High frequency lysogenization protein HflD homolog (221 aa).

Belongs to the HflD family.

Its subcellular location is the cytoplasm. The protein localises to the cell inner membrane. The protein is High frequency lysogenization protein HflD homolog of Acidithiobacillus ferrooxidans (strain ATCC 23270 / DSM 14882 / CIP 104768 / NCIMB 8455) (Ferrobacillus ferrooxidans (strain ATCC 23270)).